Consider the following 198-residue polypeptide: FMN-dependent NADH:quinone oxidoreductase (198 aa).

FMN contacts are provided by residues 92–95 (MWNL) and 136–139 (SRGG).

The protein belongs to the azoreductase type 1 family. Homodimer. FMN serves as cofactor.

It catalyses the reaction 2 a quinone + NADH + H(+) = 2 a 1,4-benzosemiquinone + NAD(+). It carries out the reaction N,N-dimethyl-1,4-phenylenediamine + anthranilate + 2 NAD(+) = 2-(4-dimethylaminophenyl)diazenylbenzoate + 2 NADH + 2 H(+). Quinone reductase that provides resistance to thiol-specific stress caused by electrophilic quinones. Its function is as follows. Also exhibits azoreductase activity. Catalyzes the reductive cleavage of the azo bond in aromatic azo compounds to the corresponding amines. The protein is FMN-dependent NADH:quinone oxidoreductase of Clostridium perfringens (strain SM101 / Type A).